Reading from the N-terminus, the 144-residue chain is Peptide methionine sulfoxide reductase B7 (144 aa).

The MsrB domain maps to 19–140 (DEEWRAVLSP…NSVSLKFSSA (122 aa)). Zn(2+) contacts are provided by Cys-58, Cys-61, Cys-104, and Cys-107. Cysteines 76 and 129 form a disulfide. Cys-129 acts as the Nucleophile in catalysis.

This sequence belongs to the MsrB Met sulfoxide reductase family. Zn(2+) serves as cofactor.

The protein resides in the cytoplasm. It is found in the cytosol. The enzyme catalyses L-methionyl-[protein] + [thioredoxin]-disulfide + H2O = L-methionyl-(R)-S-oxide-[protein] + [thioredoxin]-dithiol. Its function is as follows. Catalyzes the reduction of methionine sulfoxide (MetSO) to methionine in proteins. Plays a protective role against oxidative stress by restoring activity to proteins that have been inactivated by methionine oxidation. MSRB family specifically reduces the MetSO R-enantiomer. The protein is Peptide methionine sulfoxide reductase B7 (MSRB7) of Arabidopsis thaliana (Mouse-ear cress).